A 295-amino-acid polypeptide reads, in one-letter code: Nucleotide-binding protein LACR_1047 (295 aa).

12–19 (GMSGAGKT) lines the ATP pocket. 63-66 (DMRS) serves as a coordination point for GTP.

The protein belongs to the RapZ-like family.

In terms of biological role, displays ATPase and GTPase activities. The polypeptide is Nucleotide-binding protein LACR_1047 (Lactococcus lactis subsp. cremoris (strain SK11)).